A 760-amino-acid polypeptide reads, in one-letter code: Striatin-4 (760 aa).

The tract at residues 1-65 (MMEERAAAAV…PTAGPEPLSL (65 aa)) is disordered. Low complexity predominate over residues 7-35 (AAAVASAASSCRPLGSGTAPNPTAAAPAS). Over residues 43 to 54 (PVGKGGGGGGSP) the composition is skewed to gly residues. The residue at position 53 (serine 53) is a Phosphoserine. The stretch at 69–136 (LHFIQHEWAR…QERAKYHKLK (68 aa)) forms a coiled coil. Residues 71-79 (FIQHEWARF) form a caveolin-binding region. The calmodulin-binding stretch occupies residues 165–182 (ENSPLVWKEGRQLLRQYL). Phosphoserine is present on residues serine 206, serine 223, and serine 276. Disordered regions lie at residues 210–233 (NGAG…SGGE) and 272–346 (EDED…PHEL). 2 stretches are compositionally biased toward acidic residues: residues 272-283 (EDEDSDEDDELD) and 302-317 (EMED…DAIN). The span at 332–346 (PDPRRCTSEGNPHEL) shows a compositional bias: basic and acidic residues. 7 WD repeats span residues 443-482 (SHYD…TAKK), 496-535 (AHRG…MDPY), 549-588 (GHGD…PSCL), 595-635 (GEHG…ALLT), 642-681 (SGPA…SVHS), 684-723 (AHLD…CVQE), and 730-759 (KHEE…AKVF).

This sequence belongs to the WD repeat striatin family. Part of the core of STRIPAK complexes composed of PP2A catalytic and scaffolding subunits, the striatins (PP2A regulatory subunits), the striatin-associated proteins MOB4, STRIP1 and STRIP2, PDCD10 and members of the STE20 kinases, such as STK24 and STK26. Interacts with CTTNBP2NL. As to expression, mainly expressed in brain but is also expressed at low levels in the kidney.

It localises to the cytoplasm. It is found in the membrane. Its subcellular location is the cell projection. The protein localises to the dendritic spine. Its function is as follows. Calmodulin-binding scaffolding protein which is the center of the striatin-interacting phosphatase and kinase (STRIPAK) complexes. STRIPAK complexes have critical roles in protein (de)phosphorylation and are regulators of multiple signaling pathways including Hippo, MAPK, nuclear receptor and cytoskeleton remodeling. Different types of STRIPAK complexes are involved in a variety of biological processes such as cell growth, differentiation, apoptosis, metabolism and immune regulation. Key regulator of the expanded Hippo signaling pathway by interacting and allowing the inhibition of MAP4K kinases by the STRIPAK complex. This is Striatin-4 (Strn4) from Mus musculus (Mouse).